A 200-amino-acid chain; its full sequence is Proteasome subunit beta 2 (200 aa).

The propeptide at 1–10 (MSDQLELMTG) is removed in mature form; by autocatalysis. Threonine 11 serves as the catalytic Nucleophile.

This sequence belongs to the peptidase T1B family. The 20S proteasome core is composed of 14 alpha and 14 beta subunits that assemble into four stacked heptameric rings, resulting in a barrel-shaped structure. The two inner rings, each composed of seven catalytic beta subunits, are sandwiched by two outer rings, each composed of seven alpha subunits. The catalytic chamber with the active sites is on the inside of the barrel. Has a gated structure, the ends of the cylinder being occluded by the N-termini of the alpha-subunits. Is capped at one or both ends by the proteasome regulatory ATPase, PAN.

It localises to the cytoplasm. The enzyme catalyses Cleavage of peptide bonds with very broad specificity.. The formation of the proteasomal ATPase PAN-20S proteasome complex, via the docking of the C-termini of PAN into the intersubunit pockets in the alpha-rings, triggers opening of the gate for substrate entry. Interconversion between the open-gate and close-gate conformations leads to a dynamic regulation of the 20S proteasome proteolysis activity. Component of the proteasome core, a large protease complex with broad specificity involved in protein degradation. The protein is Proteasome subunit beta 2 of Caldivirga maquilingensis (strain ATCC 700844 / DSM 13496 / JCM 10307 / IC-167).